The primary structure comprises 309 residues: MSKFVITCIAHGENLPKETIDQIAKEITESSAKDVSINGTKKLSARATDIFIEVAGSIVQKDLKNKLTNVIDSHNDVDVIVSVDNEYRQAKKLFVFDMDSTLIYQEVIELIAAYAGVEEQVHEITERAMNNELDFKESLRERVKLLQGLQVDTLYDEIKQKLEVTKGVPELCKFLHKKNCKLAVLSGGFIQFAGFIKDQLGLDFCKANLLEVDTDGKLTGKTLGPIVDGQCKSETLLQLCNDYNVPVEASCMVGDGGNDLPAMATAGFGIAWNAKPKVQKAAPCKLNTKSMTDILYILGYTDDEIYNRQ.

The active-site Nucleophile is the Asp97. Mg(2+) contacts are provided by Asp97 and Asp99. Residue Asp99 is the Proton donor of the active site. Substrate-binding positions include Glu106, Arg142, 186-187, and Lys232; that span reads SG. Residue Asp255 participates in Mg(2+) binding. Asn258 lines the substrate pocket.

Belongs to the HAD-like hydrolase superfamily. SerB family. Requires Mg(2+) as cofactor.

The catalysed reaction is O-phospho-L-serine + H2O = L-serine + phosphate. It carries out the reaction O-phospho-D-serine + H2O = D-serine + phosphate. The protein operates within amino-acid biosynthesis; L-serine biosynthesis; L-serine from 3-phospho-D-glycerate: step 3/3. The protein is Phosphoserine phosphatase (SER2) of Saccharomyces cerevisiae (strain ATCC 204508 / S288c) (Baker's yeast).